We begin with the raw amino-acid sequence, 2431 residues long: Reducing polyketide synthase rads1 (2431 aa).

The region spanning 10-440 (RAPIAIIGLA…GTNAHIVLER (431 aa)) is the Ketosynthase family 3 (KS3) domain. Residues Cys184, His319, and His363 each act as for beta-ketoacyl synthase activity in the active site. A malonyl-CoA:ACP transacylase (MAT) domain region spans residues 558–895 (FVFTGQGAQW…NLAAELFRRG (338 aa)). Residues 944-1080 (KSILGAELPS…GLISIAYEDT (137 aa)) are N-terminal hotdog fold. The region spanning 944-1267 (KSILGAELPS…LAELEVDDAA (324 aa)) is the PKS/mFAS DH domain. Positions 946–1264 (ILGAELPSMD…DFRLAELEVD (319 aa)) are dehydratase (DH) domain. The active-site Proton acceptor; for dehydratase activity is the His976. The segment at 1108-1267 (PETCSKERFY…LAELEVDDAA (160 aa)) is C-terminal hotdog fold. The active-site Proton donor; for dehydratase activity is Asp1174. The enoyl reductase (ER) domain stretch occupies residues 1705–2023 (GLLNTLHFVP…QGKHLGKMIL (319 aa)). Cys1822 functions as the Phosphocysteine intermediate in the catalytic mechanism. The segment at 2048 to 2228 (ATYLIVGGLG…VSVNLGIMRD (181 aa)) is ketoreductase (KR) domain. The Carrier domain maps to 2346–2423 (VAAAIITEAL…TFAVQIAKKS (78 aa)). Ser2383 carries the post-translational modification O-(pantetheine 4'-phosphoryl)serine.

The protein operates within secondary metabolite biosynthesis. Functionally, reducing polyketide synthase; part of the gene cluster that mediates the biosynthesis of radicicol, a resorcylic acid lactone (RAL) that irreversibly inhibits the HSP90 molecular chaperone, an important target for cancer chemotherapy. The cluster encodes only two apparent post-PKS enzymes, a cytochrome P450 monooxygenase (radP) and a non-heme halogenase (radH) that introduce the epoxide and the chlorine, respectively. If this cluster includes all the genes required for radicicol biosynthesis, the remaining structural features of radicicol are presumably generated by the PKSs rads1 and rads2. The C-2' ketone could arise if the R-PKS rads1 and NR-PKS rads2 each carry out four iterations, in contrast to the five iteration-three iteration split for the hypothemycin PKSs. The origin of the cis 5',6' double bond is not known. The radicicol R-PKS radS1 ER domain may catalyze either double bond isomerization or reduction in the third iteration. This chain is Reducing polyketide synthase rads1, found in Floropilus chiversii (Chaetomium chiversii).